The chain runs to 860 residues: Anoctamin-7 (860 aa).

Residues 1-297 are Cytoplasmic-facing; that stretch reads MLRKQAGEED…YFAWLGFYTG (297 aa). The disordered stretch occupies residues 24 to 50; sequence NGCSYGSTAQASEAGKQQVAPSRVGSS. Residues 298–318 traverse the membrane as a helical segment; it reads WLLPAAVVGTVVFLAGCFLVF. Residues 319–362 lie on the Extracellular side of the membrane; sequence SDVPTQELCHSSDTFDMCPLCSDCSFWLLSSACTLAQAGRLFDH. The helical transmembrane segment at 363–383 threads the bilayer; that stretch reads GGTVFFSLFMALWAVLLLEYW. The Cytoplasmic segment spans residues 384 to 441; it reads KRKNATLAYRWDCSDYEDIEERPRPQFAATAPMTALNPITGEDEPYFPEKNRVRRMLA. The helical transmembrane segment at 442–462 threads the bilayer; it reads GSVVLLMMVAVVIMCLVSIIL. At 463–492 the chain is on the extracellular side; it reads YRAVMAIIVSKSNNAFLSAWASRIASLTGS. Residues 493–513 form a helical membrane-spanning segment; sequence VVNLVFILILSKVYVILAQVL. The Cytoplasmic portion of the chain corresponds to 514–530; sequence TRWEMHRTQTAFEDAFT. The helical transmembrane segment at 531 to 551 threads the bilayer; sequence LKVFIFQFVNFYASPVYIAFF. Residues 552–652 are Extracellular-facing; the sequence is KGRFVGYPGN…FHEYLEMVLQ (101 aa). The helical transmembrane segment at 653–673 threads the bilayer; that stretch reads FGFVTIFVAACPLAPLFALLN. Over 674–701 the chain is Cytoplasmic; that stretch reads NWVEIRLDARKFVCEYRRPVAERAQDIG. A helical membrane pass occupies residues 702–722; it reads IWFHILAGLTHLAVISNAFLL. Over 723 to 779 the chain is Extracellular; sequence AFSSDFLPRVYYSWTRAPDLRGFLNFTLARAPPTFTSAHNRTCRYRAFRDDDGHYSP. Asn-747 and Asn-762 each carry an N-linked (GlcNAc...) asparagine glycan. A helical transmembrane segment spans residues 780 to 800; it reads TYWTLLAIRLAFVIVFEHVVF. Over 801-860 the chain is Cytoplasmic; that stretch reads STGRFLDLLVPDIPESVEIKVKREYYLAKQALADNEALLGATGVKGEQPPSSEPSLGLPA.

Belongs to the anoctamin family.

It is found in the cell membrane. The protein resides in the endoplasmic reticulum. It catalyses the reaction a 1,2-diacyl-sn-glycero-3-phospho-L-serine(in) = a 1,2-diacyl-sn-glycero-3-phospho-L-serine(out). The catalysed reaction is a beta-D-galactosyl-(1&lt;-&gt;1')-N-acylsphing-4-enine(out) = a beta-D-galactosyl-(1&lt;-&gt;1')-N-acylsphing-4-enine(in). The enzyme catalyses a 1,2-diacyl-sn-glycero-3-phosphocholine(in) = a 1,2-diacyl-sn-glycero-3-phosphocholine(out). Its function is as follows. Has calcium-dependent phospholipid scramblase activity; scrambles phosphatidylserine, phosphatidylcholine and galactosylceramide. Does not exhibit calcium-activated chloride channel (CaCC) activity. May play a role in cell-cell interactions. The chain is Anoctamin-7 (Ano7) from Rattus norvegicus (Rat).